A 112-amino-acid polypeptide reads, in one-letter code: Small ribosomal subunit protein bS16 (112 aa).

The protein belongs to the bacterial ribosomal protein bS16 family.

In Aquifex aeolicus (strain VF5), this protein is Small ribosomal subunit protein bS16.